Reading from the N-terminus, the 1113-residue chain is Carbamoyl phosphate synthase arginine-specific large chain (1113 aa).

The carboxyphosphate synthetic domain stretch occupies residues 23–420 (QLIKGIDSVL…AFQKAFRQVD (398 aa)). Residues R150, R190, G196, G197, K227, L229, E234, G260, I261, H262, Q303, and E317 each coordinate ATP. An ATP-grasp 1 domain is found at 154–346 (ARALKEINMP…LAYTAAKIAL (193 aa)). Residues Q303, E317, and N319 each contribute to the Mg(2+) site. Q303, E317, and N319 together coordinate Mn(2+). Positions 421–568 (PSLLGFQGSD…YVTYNAVKDD (148 aa)) are oligomerization domain. A carbamoyl phosphate synthetic domain region spans residues 569-955 (VTFGDNGIMV…SYWVALQGLM (387 aa)). An ATP-grasp 2 domain is found at 693–888 (STILDTLGLD…FVEIAVKAFL (196 aa)). ATP is bound by residues R729, K768, I770, E775, G800, V801, H802, S803, Q843, and E859. The Mg(2+) site is built by Q843, E859, and N861. Positions 843, 859, and 861 each coordinate Mn(2+). An allosteric domain region spans residues 956-1097 (SFCVPLPPSG…EMRQSDGPET (142 aa)). The 157-residue stretch at 957-1113 (FCVPLPPSGI…WREYLGFKPT (157 aa)) folds into the MGS-like domain.

This sequence belongs to the CarB family. As to quaternary structure, heterodimer composed of 2 chains; the small (or glutamine) chain promotes the hydrolysis of glutamine to ammonia, which is used by the large (or ammonia) chain to synthesize carbamoyl phosphate. Mg(2+) is required as a cofactor. It depends on Mn(2+) as a cofactor.

It localises to the cytoplasm. The enzyme catalyses hydrogencarbonate + L-glutamine + 2 ATP + H2O = carbamoyl phosphate + L-glutamate + 2 ADP + phosphate + 2 H(+). It carries out the reaction hydrogencarbonate + NH4(+) + 2 ATP = carbamoyl phosphate + 2 ADP + phosphate + 2 H(+). It functions in the pathway amino-acid biosynthesis; L-arginine biosynthesis; carbamoyl phosphate from bicarbonate: step 1/1. Large subunit of the arginine-specific carbamoyl phosphate synthase (CPSase). CPSase catalyzes the formation of carbamoyl phosphate from the ammonia moiety of glutamine, hydrogencarbonate, and phosphate donated by ATP, constituting the first step of 2 biosynthetic pathways, one leading to arginine and/or urea and the other to pyrimidine nucleotides. The large subunit (synthetase) binds the substrates ammonia (free or transferred from glutamine from the small subunit), hydrogencarbonate and ATP and carries out an ATP-coupled ligase reaction, activating hydrogencarbonate by forming carboxy phosphate which reacts with ammonia to form carbamoyl phosphate. This Eremothecium gossypii (strain ATCC 10895 / CBS 109.51 / FGSC 9923 / NRRL Y-1056) (Yeast) protein is Carbamoyl phosphate synthase arginine-specific large chain (CPA2).